A 474-amino-acid chain; its full sequence is ATP synthase subunit beta (474 aa).

153–160 (GGAGVGKT) lines the ATP pocket.

The protein belongs to the ATPase alpha/beta chains family. As to quaternary structure, F-type ATPases have 2 components, CF(1) - the catalytic core - and CF(0) - the membrane proton channel. CF(1) has five subunits: alpha(3), beta(3), gamma(1), delta(1), epsilon(1). CF(0) has three main subunits: a(1), b(2) and c(9-12). The alpha and beta chains form an alternating ring which encloses part of the gamma chain. CF(1) is attached to CF(0) by a central stalk formed by the gamma and epsilon chains, while a peripheral stalk is formed by the delta and b chains.

The protein resides in the cell inner membrane. The catalysed reaction is ATP + H2O + 4 H(+)(in) = ADP + phosphate + 5 H(+)(out). Produces ATP from ADP in the presence of a proton gradient across the membrane. The catalytic sites are hosted primarily by the beta subunits. This is ATP synthase subunit beta from Rickettsia typhi (strain ATCC VR-144 / Wilmington).